Consider the following 303-residue polypeptide: tRNA dimethylallyltransferase (303 aa).

Residue 9 to 16 coordinates ATP; the sequence is GPTASGKS. 11–16 is a substrate binding site; the sequence is TASGKS. The interval 34–37 is interaction with substrate tRNA; sequence DSKQ.

It belongs to the IPP transferase family. In terms of assembly, monomer. The cofactor is Mg(2+).

The catalysed reaction is adenosine(37) in tRNA + dimethylallyl diphosphate = N(6)-dimethylallyladenosine(37) in tRNA + diphosphate. Catalyzes the transfer of a dimethylallyl group onto the adenine at position 37 in tRNAs that read codons beginning with uridine, leading to the formation of N6-(dimethylallyl)adenosine (i(6)A). This chain is tRNA dimethylallyltransferase, found in Ehrlichia chaffeensis (strain ATCC CRL-10679 / Arkansas).